Consider the following 94-residue polypeptide: Sapecin (94 aa).

An N-terminal signal peptide occupies residues 1 to 23; the sequence is MKSFIVLAVTLCLAAFFMGQSVA. Residues 24–54 constitute a propeptide that is removed on maturation; sequence SPAAAAEESKFVDGLHALKTIEPELHGRYKR. Intrachain disulfides connect C57–C84, C70–C90, and C74–C92.

The protein belongs to the invertebrate defensin family. Type 1 subfamily. In terms of tissue distribution, hemocytes and fat body.

It localises to the secreted. Sapecins, which are potent bactericidal proteins, are produced in response to injury. Sapecin is cytotoxic to Gram-positive bacteria, and to a lesser extent against Gram-negative bacteria. The sequence is that of Sapecin from Sarcophaga peregrina (Flesh fly).